A 215-amino-acid chain; its full sequence is Nascent polypeptide-associated complex subunit alpha (215 aa).

The segment at 1–81 (MPGEATDTVP…SEKKARKAMS (81 aa)) is disordered. A compositionally biased stretch (polar residues) spans 9–28 (VPATEQELPQPQAETGSGTE). A compositionally biased stretch (acidic residues) spans 29–42 (SDSDESVPELEEQD). Ser43 carries the post-translational modification Phosphoserine; by ILK1. Residues 44-57 (TQATTQQAQLAAAA) are compositionally biased toward low complexity. Residues 69–80 (QSRSEKKARKAM) are required for DNA-binding. The 66-residue stretch at 70–135 (SRSEKKARKA…AKIEDLSQQA (66 aa)) folds into the NAC-A/B domain. An RNA/DNA-binding region spans residues 93–108 (RVTIRKSKNILFVITK). Ser132 carries the post-translational modification Phosphoserine. Residue Lys142 is modified to N6-acetyllysine; alternate. Residue Lys142 forms a Glycyl lysine isopeptide (Lys-Gly) (interchain with G-Cter in SUMO2); alternate linkage. At Thr159 the chain carries Phosphothreonine; by GSK3-beta. The residue at position 161 (Thr161) is a Phosphothreonine. Phosphoserine occurs at positions 166, 186, 191, and 203. Residues 176-213 (VEVKDIELVMSQANVSRAKAVRALKNNSNDIVNAIMEL) enclose the UBA domain.

Belongs to the NAC-alpha family. Part of the nascent polypeptide-associated complex (NAC), which is a heterodimer of NACA and BTF3 (via NAC-A/B domains). NAC associates with ribosomes through the BTF3/NACB subunit and contacts the ribosomal protein L23, which is positioned near the exiting site. Both subunits can contact nascent polypeptide chains. NACA may also form homodimers, and only this form binds DNA. Interacts with TBP and JUN. Post-translationally, phosphorylation of Ser-43 by ILK during cell adhesion may promote nuclear localization. Phosphorylation of Thr-159 by GSK3B may promote proteasome mediated degradation.

The protein resides in the cytoplasm. It is found in the nucleus. Its function is as follows. Prevents inappropriate targeting of non-secretory polypeptides to the endoplasmic reticulum (ER). Binds to nascent polypeptide chains as they emerge from the ribosome and blocks their interaction with the signal recognition particle (SRP), which normally targets nascent secretory peptides to the ER. Also reduces the inherent affinity of ribosomes for protein translocation sites in the ER membrane (M sites). May act as a specific coactivator for JUN, binding to DNA and stabilizing the interaction of JUN homodimers with target gene promoters. This chain is Nascent polypeptide-associated complex subunit alpha (NACA), found in Bos taurus (Bovine).